The following is a 57-amino-acid chain: Phosphatase RapH inhibitor (57 aa).

2 propeptides span residues 1–34 (MPIK…FKES) and 41–57 (YIDH…KALS). The interval 26 to 57 (TNSGGFKESTDRNTTYIDHSPYKLSDQKKALS) is disordered.

This sequence belongs to the Phr family. Contains a predicted signal peptide cleavage site in the N-terminal region, however the propeptide is probably only subject to processing events at the ends of the mature peptide.

It localises to the secreted. The protein resides in the cytoplasm. Its function is as follows. Signaling molecule involved the regulation of both sporulation and competence. Secreted during production, but the mature peptide acts intracellularly, indicating that it needs to be imported into the cell to function. Acts by inhibiting RapH activity. Can inhibit both RapH activities, the dephosphorylation of Spo0F and the sequestration of ComA. This is Phosphatase RapH inhibitor (phrH) from Bacillus subtilis (strain 168).